The sequence spans 207 residues: V-type ATP synthase subunit D (207 aa).

This sequence belongs to the V-ATPase D subunit family.

Produces ATP from ADP in the presence of a proton gradient across the membrane. The chain is V-type ATP synthase subunit D from Streptococcus gordonii (strain Challis / ATCC 35105 / BCRC 15272 / CH1 / DL1 / V288).